Consider the following 692-residue polypeptide: Elongation factor G (692 aa).

A tr-type G domain is found at 8-283; sequence EMTRNIGIMA…AVLDYMPAPT (276 aa). GTP contacts are provided by residues 17-24, 81-85, and 135-138; these read AHIDAGKT, DTPGH, and NKMD.

This sequence belongs to the TRAFAC class translation factor GTPase superfamily. Classic translation factor GTPase family. EF-G/EF-2 subfamily.

It is found in the cytoplasm. Catalyzes the GTP-dependent ribosomal translocation step during translation elongation. During this step, the ribosome changes from the pre-translocational (PRE) to the post-translocational (POST) state as the newly formed A-site-bound peptidyl-tRNA and P-site-bound deacylated tRNA move to the P and E sites, respectively. Catalyzes the coordinated movement of the two tRNA molecules, the mRNA and conformational changes in the ribosome. This chain is Elongation factor G, found in Citrifermentans bemidjiense (strain ATCC BAA-1014 / DSM 16622 / JCM 12645 / Bem) (Geobacter bemidjiensis).